Here is a 321-residue protein sequence, read N- to C-terminus: Citrate synthase (321 aa).

Residues His248 and Asp306 contribute to the active site.

The protein belongs to the citrate synthase family.

The catalysed reaction is oxaloacetate + acetyl-CoA + H2O = citrate + CoA + H(+). It functions in the pathway carbohydrate metabolism; tricarboxylic acid cycle; isocitrate from oxaloacetate: step 1/2. This is Citrate synthase (gltA) from Bartonella bacilliformis.